The sequence spans 300 residues: Transcription initiation factor IIB (300 aa).

A TFIIB-type zinc finger spans residues 3-34 (KQRVCPVCGSTEFIYDPERGEIVCARCGYVIE). Zn(2+) contacts are provided by C7, C10, C26, and C29. 2 repeat units span residues 114–197 (SELD…ARNL) and 210–291 (DYVN…ELVE).

Belongs to the TFIIB family.

Stabilizes TBP binding to an archaeal box-A promoter. Also responsible for recruiting RNA polymerase II to the pre-initiation complex (DNA-TBP-TFIIB). This chain is Transcription initiation factor IIB, found in Pyrococcus abyssi (strain GE5 / Orsay).